Here is a 385-residue protein sequence, read N- to C-terminus: Probable peptidoglycan glycosyltransferase FtsW (385 aa).

A run of 9 helical transmembrane segments spans residues 18 to 38, 57 to 77, 81 to 101, 111 to 131, 157 to 177, 195 to 215, 280 to 300, 311 to 331, and 347 to 367; these read LLWT…SASL, IYLA…PLAL, LRFV…IPGL, WIAL…CFVL, LLGV…VVVL, FLLI…AEPY, LGLL…WRVF, LLYH…QAFI, and LPFI…VGLI.

The protein belongs to the SEDS family. FtsW subfamily.

The protein localises to the cell inner membrane. The catalysed reaction is [GlcNAc-(1-&gt;4)-Mur2Ac(oyl-L-Ala-gamma-D-Glu-L-Lys-D-Ala-D-Ala)](n)-di-trans,octa-cis-undecaprenyl diphosphate + beta-D-GlcNAc-(1-&gt;4)-Mur2Ac(oyl-L-Ala-gamma-D-Glu-L-Lys-D-Ala-D-Ala)-di-trans,octa-cis-undecaprenyl diphosphate = [GlcNAc-(1-&gt;4)-Mur2Ac(oyl-L-Ala-gamma-D-Glu-L-Lys-D-Ala-D-Ala)](n+1)-di-trans,octa-cis-undecaprenyl diphosphate + di-trans,octa-cis-undecaprenyl diphosphate + H(+). It functions in the pathway cell wall biogenesis; peptidoglycan biosynthesis. In terms of biological role, peptidoglycan polymerase that is essential for cell division. The sequence is that of Probable peptidoglycan glycosyltransferase FtsW from Alcanivorax borkumensis (strain ATCC 700651 / DSM 11573 / NCIMB 13689 / SK2).